The primary structure comprises 925 residues: Protein translocase subunit SecA (925 aa).

ATP is bound by residues Gln-87, 105–109 (GEGKT), and Asp-531. Residues 867-909 (AAGADMRFQHSQPESVLHKPEAGEGEEAQPFRRETPKVGRNDP) are disordered. Basic and acidic residues predominate over residues 895-906 (QPFRRETPKVGR). Cys-910, Cys-912, Cys-921, and His-922 together coordinate Zn(2+).

Belongs to the SecA family. In terms of assembly, monomer and homodimer. Part of the essential Sec protein translocation apparatus which comprises SecA, SecYEG and auxiliary proteins SecDF-YajC and YidC. Requires Zn(2+) as cofactor.

The protein localises to the cell inner membrane. The protein resides in the cytoplasm. It carries out the reaction ATP + H2O + cellular proteinSide 1 = ADP + phosphate + cellular proteinSide 2.. Part of the Sec protein translocase complex. Interacts with the SecYEG preprotein conducting channel. Has a central role in coupling the hydrolysis of ATP to the transfer of proteins into and across the cell membrane, serving both as a receptor for the preprotein-SecB complex and as an ATP-driven molecular motor driving the stepwise translocation of polypeptide chains across the membrane. The polypeptide is Protein translocase subunit SecA (Thioalkalivibrio sulfidiphilus (strain HL-EbGR7)).